We begin with the raw amino-acid sequence, 533 residues long: Acid-sensing ion channel 2 (533 aa).

Residues 1–16 (MDLKEACGSEASRETE) show a composition bias toward basic and acidic residues. Positions 1–23 (MDLKEACGSEASRETESGGMGSL) are disordered. The Cytoplasmic segment spans residues 1–68 (MDLKEACGSE…STSRRLLWSA (68 aa)). A helical transmembrane segment spans residues 69 to 89 (ALLASLVLLVLESTERLAYFL). Residues 90 to 445 (SYPHVTSVDA…ETIEQKKAYE (356 aa)) are Extracellular-facing. Disulfide bonds link Cys113–Cys214, Cys310–Cys385, Cys328–Cys381, Cys332–Cys379, Cys341–Cys363, and Cys343–Cys355. The N-linked (GlcNAc...) asparagine glycan is linked to Asn163. N-linked (GlcNAc...) asparagine glycans are attached at residues Asn386 and Asn413. A helical membrane pass occupies residues 446 to 466 (VAGLLGDIGGQMGLFIGASIL). Residues 462 to 464 (GAS) carry the GAS motif; ion selectivity filter motif. Residues 467–533 (TLLELFDYAY…TLGTLEEIAC (67 aa)) lie on the Cytoplasmic side of the membrane.

It belongs to the amiloride-sensitive sodium channel (TC 1.A.6) family. ASIC2 subfamily. As to quaternary structure, can form homotrimers; probably non-functional. Heterotrimer; could form functional heterotrimers producing channel with specific properties depending on their composition. Expressed in central nervous system.

It localises to the cell membrane. The catalysed reaction is Na(+)(in) = Na(+)(out). Inhibited by the diuretic drug amiloride. Functionally, could form pH-gated heterotrimeric sodium channels that act as postsynaptic excitatory sensors in the nervous system, generating rapid, transient inward currents that fully desensitize upon extracellular acidification. This chain is Acid-sensing ion channel 2 (asic2), found in Danio rerio (Zebrafish).